The sequence spans 295 residues: Bifunctional protein FolD (295 aa).

NADP(+)-binding positions include 165–167 (GRS), S190, and I231.

The protein belongs to the tetrahydrofolate dehydrogenase/cyclohydrolase family. In terms of assembly, homodimer.

The enzyme catalyses (6R)-5,10-methylene-5,6,7,8-tetrahydrofolate + NADP(+) = (6R)-5,10-methenyltetrahydrofolate + NADPH. It catalyses the reaction (6R)-5,10-methenyltetrahydrofolate + H2O = (6R)-10-formyltetrahydrofolate + H(+). It participates in one-carbon metabolism; tetrahydrofolate interconversion. Its function is as follows. Catalyzes the oxidation of 5,10-methylenetetrahydrofolate to 5,10-methenyltetrahydrofolate and then the hydrolysis of 5,10-methenyltetrahydrofolate to 10-formyltetrahydrofolate. This Nitrosomonas eutropha (strain DSM 101675 / C91 / Nm57) protein is Bifunctional protein FolD.